We begin with the raw amino-acid sequence, 206 residues long: Inner membrane-spanning protein YciB (206 aa).

Helical transmembrane passes span 50-70 (PILL…GYLL), 78-98 (GTLW…IYFH), 105-125 (WKPT…QIFL), 150-170 (LSWV…AFNF), and 173-193 (AAWV…FIII).

It belongs to the YciB family.

It is found in the cell inner membrane. Its function is as follows. Plays a role in cell envelope biogenesis, maintenance of cell envelope integrity and membrane homeostasis. The protein is Inner membrane-spanning protein YciB of Herminiimonas arsenicoxydans.